The sequence spans 359 residues: Chorismate synthase (359 aa).

R47 lines the NADP(+) pocket. FMN-binding positions include 123-125, G283, 298-302, and R326; these read RSS and KPTSS.

The protein belongs to the chorismate synthase family. In terms of assembly, homotetramer. FMNH2 serves as cofactor.

The enzyme catalyses 5-O-(1-carboxyvinyl)-3-phosphoshikimate = chorismate + phosphate. The protein operates within metabolic intermediate biosynthesis; chorismate biosynthesis; chorismate from D-erythrose 4-phosphate and phosphoenolpyruvate: step 7/7. Its function is as follows. Catalyzes the anti-1,4-elimination of the C-3 phosphate and the C-6 proR hydrogen from 5-enolpyruvylshikimate-3-phosphate (EPSP) to yield chorismate, which is the branch point compound that serves as the starting substrate for the three terminal pathways of aromatic amino acid biosynthesis. This reaction introduces a second double bond into the aromatic ring system. This chain is Chorismate synthase, found in Chlamydia abortus (strain DSM 27085 / S26/3) (Chlamydophila abortus).